The following is a 94-amino-acid chain: Aspartyl/glutamyl-tRNA(Asn/Gln) amidotransferase subunit C (94 aa).

The protein belongs to the GatC family. In terms of assembly, heterotrimer of A, B and C subunits.

It carries out the reaction L-glutamyl-tRNA(Gln) + L-glutamine + ATP + H2O = L-glutaminyl-tRNA(Gln) + L-glutamate + ADP + phosphate + H(+). The catalysed reaction is L-aspartyl-tRNA(Asn) + L-glutamine + ATP + H2O = L-asparaginyl-tRNA(Asn) + L-glutamate + ADP + phosphate + 2 H(+). Allows the formation of correctly charged Asn-tRNA(Asn) or Gln-tRNA(Gln) through the transamidation of misacylated Asp-tRNA(Asn) or Glu-tRNA(Gln) in organisms which lack either or both of asparaginyl-tRNA or glutaminyl-tRNA synthetases. The reaction takes place in the presence of glutamine and ATP through an activated phospho-Asp-tRNA(Asn) or phospho-Glu-tRNA(Gln). The sequence is that of Aspartyl/glutamyl-tRNA(Asn/Gln) amidotransferase subunit C from Solidesulfovibrio magneticus (strain ATCC 700980 / DSM 13731 / RS-1) (Desulfovibrio magneticus).